The following is a 712-amino-acid chain: Ribosome-releasing factor 2, mitochondrial (712 aa).

Residues 1–28 (MQYSLLSAQLRCSRFLLRQQAPFINRCY) constitute a mitochondrion transit peptide. A tr-type G domain is found at 30-309 (DDIRNIGILA…AVNAYLPTPN (280 aa)). Residues 39-46 (AHIDAGKT), 103-107 (DTPGH), and 157-160 (NKMD) contribute to the GTP site.

Belongs to the TRAFAC class translation factor GTPase superfamily. Classic translation factor GTPase family. EF-G/EF-2 subfamily.

The protein resides in the mitochondrion. Functionally, mitochondrial GTPase that mediates the disassembly of ribosomes from messenger RNA at the termination of mitochondrial protein biosynthesis. Not involved in the GTP-dependent ribosomal translocation step during translation elongation. The chain is Ribosome-releasing factor 2, mitochondrial from Drosophila virilis (Fruit fly).